Consider the following 744-residue polypeptide: Biotin sulfoxide reductase (744 aa).

Ser-121 serves as a coordination point for Mo-bis(molybdopterin guanine dinucleotide).

It belongs to the prokaryotic molybdopterin-containing oxidoreductase family. Mo-bis(molybdopterin guanine dinucleotide) is required as a cofactor.

In terms of biological role, this enzyme may serve as a scavenger, allowing the cell to utilize biotin sulfoxide as a biotin source. It reduces a spontaneous oxidation product of biotin, D-biotin D-sulfoxide (BSO or BDS), back to biotin. The chain is Biotin sulfoxide reductase from Cereibacter sphaeroides (Rhodobacter sphaeroides).